Reading from the N-terminus, the 347-residue chain is NADH-quinone oxidoreductase subunit H (347 aa).

The next 8 membrane-spanning stretches (helical) occupy residues 21-41 (IAGILLIALPLMLGVAMIIYA), 87-107 (GLFLIAPIITFTVALMAWAVI), 120-140 (VGLLYVLAISSLGVYGVVIAG), 160-180 (ISYEVSIGFILICVVLWAGTF), 194-214 (WIINGFVANPLLFPMWVMFLI), 259-279 (LLMCALNAVLFWGGYLPPLDI), 282-302 (LYLVPGFVWLLLKILFFFFIF), and 324-344 (VFLPVSLLFVFLVSGYLMATG).

Belongs to the complex I subunit 1 family. As to quaternary structure, NDH-1 is composed of 14 different subunits. Subunits NuoA, H, J, K, L, M, N constitute the membrane sector of the complex.

It localises to the cell inner membrane. It carries out the reaction a quinone + NADH + 5 H(+)(in) = a quinol + NAD(+) + 4 H(+)(out). In terms of biological role, NDH-1 shuttles electrons from NADH, via FMN and iron-sulfur (Fe-S) centers, to quinones in the respiratory chain. The immediate electron acceptor for the enzyme in this species is believed to be ubiquinone. Couples the redox reaction to proton translocation (for every two electrons transferred, four hydrogen ions are translocated across the cytoplasmic membrane), and thus conserves the redox energy in a proton gradient. This subunit may bind ubiquinone. This chain is NADH-quinone oxidoreductase subunit H, found in Novosphingobium aromaticivorans (strain ATCC 700278 / DSM 12444 / CCUG 56034 / CIP 105152 / NBRC 16084 / F199).